The following is a 240-amino-acid chain: Putative glycyl-radical enzyme activating enzyme MJ1227 (240 aa).

The Radical SAM core domain occupies 14-232 (IDYPKKASAV…KKYIDNVVIR (219 aa)). C29, C33, and C36 together coordinate [4Fe-4S] cluster. S-adenosyl-L-methionine is bound by residues 35-37 (YCH), G71, and 126-128 (FDK).

It belongs to the organic radical-activating enzymes family. Requires [4Fe-4S] cluster as cofactor.

It carries out the reaction glycyl-[protein] + reduced [flavodoxin] + S-adenosyl-L-methionine = glycin-2-yl radical-[protein] + semiquinone [flavodoxin] + 5'-deoxyadenosine + L-methionine + H(+). This chain is Putative glycyl-radical enzyme activating enzyme MJ1227, found in Methanocaldococcus jannaschii (strain ATCC 43067 / DSM 2661 / JAL-1 / JCM 10045 / NBRC 100440) (Methanococcus jannaschii).